A 706-amino-acid chain; its full sequence is G2/M phase-specific E3 ubiquitin-protein ligase (706 aa).

A C2HC pre-PHD-type zinc finger spans residues asparagine 11 to isoleucine 51. The PHD-type 1 zinc-finger motif lies at leucine 79–arginine 128. The segment at proline 143 to serine 193 adopts a PHD-type 2; degenerate zinc-finger fold. The PHD-type 3 zinc finger occupies arginine 237 to arginine 286. The HECT domain maps to isoleucine 371 to glutamate 698.

Its subcellular location is the nucleus. It localises to the nucleolus. It is found in the cytoplasm. The catalysed reaction is S-ubiquitinyl-[E2 ubiquitin-conjugating enzyme]-L-cysteine + [acceptor protein]-L-lysine = [E2 ubiquitin-conjugating enzyme]-L-cysteine + N(6)-ubiquitinyl-[acceptor protein]-L-lysine.. Its pathway is protein modification; protein ubiquitination. Its function is as follows. E3 ubiquitin-protein ligase which accepts ubiquitin from an E2 ubiquitin-conjugating enzyme in the form of a thioester and then directly transfers the ubiquitin to targeted substrates. Essential in early embryonic development to prevent apoptotic death. The sequence is that of G2/M phase-specific E3 ubiquitin-protein ligase (G2E3) from Macaca fascicularis (Crab-eating macaque).